The sequence spans 165 residues: Regulatory protein RecX (165 aa).

This sequence belongs to the RecX family.

It localises to the cytoplasm. Functionally, modulates RecA activity. This chain is Regulatory protein RecX, found in Cronobacter sakazakii (strain ATCC BAA-894) (Enterobacter sakazakii).